The chain runs to 339 residues: Ornithine carbamoyltransferase, catabolic (339 aa).

Carbamoyl phosphate-binding positions include 57 to 60 (STRT), Gln-84, Arg-108, and 135 to 138 (HPTQ). Residues Asn-167, Asp-231, and 235–236 (SM) contribute to the L-ornithine site. Carbamoyl phosphate-binding positions include 274–275 (CL) and Arg-319.

Belongs to the aspartate/ornithine carbamoyltransferase superfamily. OTCase family.

The protein localises to the cytoplasm. It carries out the reaction carbamoyl phosphate + L-ornithine = L-citrulline + phosphate + H(+). The protein operates within amino-acid degradation; L-arginine degradation via ADI pathway; carbamoyl phosphate from L-arginine: step 2/2. Reversibly catalyzes the transfer of the carbamoyl group from carbamoyl phosphate (CP) to the N(epsilon) atom of ornithine (ORN) to produce L-citrulline. The chain is Ornithine carbamoyltransferase, catabolic (arcB) from Enterococcus faecalis (strain ATCC 700802 / V583).